Here is a 484-residue protein sequence, read N- to C-terminus: 6-phosphogluconate dehydrogenase, decarboxylating (484 aa).

Residues 11–16 (GLAVMG), 34–36 (NRT), 76–78 (VRA), and N104 each bind NADP(+). Substrate is bound by residues N104 and 130 to 132 (SGG). The Proton acceptor role is filled by K185. 188–189 (HN) contacts substrate. Catalysis depends on E192, which acts as the Proton donor. Positions 193, 262, 289, 447, and 453 each coordinate substrate.

Belongs to the 6-phosphogluconate dehydrogenase family. As to quaternary structure, homodimer.

The catalysed reaction is 6-phospho-D-gluconate + NADP(+) = D-ribulose 5-phosphate + CO2 + NADPH. Its pathway is carbohydrate degradation; pentose phosphate pathway; D-ribulose 5-phosphate from D-glucose 6-phosphate (oxidative stage): step 3/3. In terms of biological role, catalyzes the oxidative decarboxylation of 6-phosphogluconate to ribulose 5-phosphate and CO(2), with concomitant reduction of NADP to NADPH. In Haemophilus ducreyi (strain 35000HP / ATCC 700724), this protein is 6-phosphogluconate dehydrogenase, decarboxylating (gnd).